Reading from the N-terminus, the 209-residue chain is Peptidyl-tRNA hydrolase (209 aa).

Position 14 (tyrosine 14) interacts with tRNA. Histidine 19 acts as the Proton acceptor in catalysis. TRNA-binding residues include tyrosine 68, asparagine 70, and asparagine 116.

The protein belongs to the PTH family. Monomer.

Its subcellular location is the cytoplasm. It catalyses the reaction an N-acyl-L-alpha-aminoacyl-tRNA + H2O = an N-acyl-L-amino acid + a tRNA + H(+). Its function is as follows. Hydrolyzes ribosome-free peptidyl-tRNAs (with 1 or more amino acids incorporated), which drop off the ribosome during protein synthesis, or as a result of ribosome stalling. Functionally, catalyzes the release of premature peptidyl moieties from peptidyl-tRNA molecules trapped in stalled 50S ribosomal subunits, and thus maintains levels of free tRNAs and 50S ribosomes. This chain is Peptidyl-tRNA hydrolase, found in Phenylobacterium zucineum (strain HLK1).